We begin with the raw amino-acid sequence, 132 residues long: Holo-[acyl-carrier-protein] synthase (132 aa).

The Mg(2+) site is built by Asp13 and Glu63.

This sequence belongs to the P-Pant transferase superfamily. AcpS family. Requires Mg(2+) as cofactor.

It is found in the cytoplasm. It catalyses the reaction apo-[ACP] + CoA = holo-[ACP] + adenosine 3',5'-bisphosphate + H(+). Functionally, transfers the 4'-phosphopantetheine moiety from coenzyme A to a Ser of acyl-carrier-protein. This chain is Holo-[acyl-carrier-protein] synthase, found in Gloeobacter violaceus (strain ATCC 29082 / PCC 7421).